Reading from the N-terminus, the 239-residue chain is Small ribosomal subunit protein uS2 (239 aa).

It belongs to the universal ribosomal protein uS2 family.

This is Small ribosomal subunit protein uS2 from Prochlorococcus marinus (strain MIT 9303).